Reading from the N-terminus, the 196-residue chain is Peptidyl-tRNA hydrolase (196 aa).

Tyrosine 21 is a tRNA binding site. Histidine 26 acts as the Proton acceptor in catalysis. Residues phenylalanine 72, asparagine 74, and asparagine 120 each coordinate tRNA.

It belongs to the PTH family. As to quaternary structure, monomer.

The protein resides in the cytoplasm. The enzyme catalyses an N-acyl-L-alpha-aminoacyl-tRNA + H2O = an N-acyl-L-amino acid + a tRNA + H(+). Functionally, hydrolyzes ribosome-free peptidyl-tRNAs (with 1 or more amino acids incorporated), which drop off the ribosome during protein synthesis, or as a result of ribosome stalling. Catalyzes the release of premature peptidyl moieties from peptidyl-tRNA molecules trapped in stalled 50S ribosomal subunits, and thus maintains levels of free tRNAs and 50S ribosomes. The protein is Peptidyl-tRNA hydrolase of Mycobacteroides abscessus (strain ATCC 19977 / DSM 44196 / CCUG 20993 / CIP 104536 / JCM 13569 / NCTC 13031 / TMC 1543 / L948) (Mycobacterium abscessus).